We begin with the raw amino-acid sequence, 334 residues long: Beta-1,3-N-acetylglucosaminyltransferase radical fringe (334 aa).

At 1–6 (MSRVRR) the chain is on the cytoplasmic side. The helical; Signal-anchor for type II membrane protein transmembrane segment at 7-29 (VLCRACLALAAVLAVLLLLPLPL) threads the bilayer. Over 30 to 334 (PLPLPLPRAP…MKNRGKEAFQ (305 aa)) the chain is Lumenal. R77 is a substrate binding site. An N-linked (GlcNAc...) asparagine glycan is attached at N116. 2 cysteine pairs are disulfide-bonded: C117/C128 and C146/C210. Position 150 (D150) interacts with substrate. A Mn(2+)-binding site is contributed by D151. The active site involves D240. Position 264 (H264) interacts with Mn(2+). Residues C314 and C323 are joined by a disulfide bond.

This sequence belongs to the glycosyltransferase 31 family. The cofactor is Mn(2+). Most abundantly expressed in adult brain. Expressed in most neurons of the brain but not in glial cells. Also detected to a lower extent in adult lung and kidney.

The protein resides in the golgi apparatus membrane. It carries out the reaction 3-O-(alpha-L-fucosyl)-L-threonyl-[EGF-like domain protein] + UDP-N-acetyl-alpha-D-glucosamine = 3-O-(N-acetyl-beta-D-glucosaminyl-(1-&gt;3)-alpha-L-fucosyl)-L-threonyl-[EGF-like domain protein] + UDP + H(+). The catalysed reaction is 3-O-(alpha-L-fucosyl)-L-seryl-[EGF-like domain protein] + UDP-N-acetyl-alpha-D-glucosamine = 3-O-(N-acetyl-beta-D-glucosaminyl-(1-&gt;3)-alpha-L-fucosyl)-L-seryl-[EGF-like domain protein] + UDP + H(+). Its function is as follows. Glycosyltransferase that initiates the elongation of O-linked fucose residues attached to EGF-like repeats in the extracellular domain of Notch molecules. Modulates NOTCH1 activity by modifying O-fucose residues at specific EGF-like domains resulting in enhancement of NOTCH1 activation by DLL1 and JAG1. Inhibits Notch signaling in postmitotic neurons of the brain. It may play a role in adult brain and in neurogenesis. It may play a role in limb development. The protein is Beta-1,3-N-acetylglucosaminyltransferase radical fringe of Rattus norvegicus (Rat).